Reading from the N-terminus, the 213-residue chain is Protein-L-isoaspartate O-methyltransferase 1 (213 aa).

The active site involves S64.

It belongs to the methyltransferase superfamily. L-isoaspartyl/D-aspartyl protein methyltransferase family.

The protein localises to the cytoplasm. It carries out the reaction [protein]-L-isoaspartate + S-adenosyl-L-methionine = [protein]-L-isoaspartate alpha-methyl ester + S-adenosyl-L-homocysteine. Catalyzes the methyl esterification of L-isoaspartyl residues in peptides and proteins that result from spontaneous decomposition of normal L-aspartyl and L-asparaginyl residues. It plays a role in the repair and/or degradation of damaged proteins. This Nitrosococcus oceani (strain ATCC 19707 / BCRC 17464 / JCM 30415 / NCIMB 11848 / C-107) protein is Protein-L-isoaspartate O-methyltransferase 1.